The sequence spans 278 residues: Tumor necrosis factor ligand superfamily member 6 (278 aa).

The Cytoplasmic portion of the chain corresponds to 1–77 (MQQPVNYPCP…SPLKKKDNIE (77 aa)). Residues 26–68 (PGSVFSCPSSGPRGPGQRRPPPPPPPPSPLPPPSQPPPLPPLS) form a disordered region. The segment covering 33–42 (PSSGPRGPGQ) has biased composition (low complexity). Pro residues predominate over residues 43–68 (RRPPPPPPPPSPLPPPSQPPPLPPLS). The helical; Signal-anchor for type II membrane protein transmembrane segment at 78–99 (LWLPVIFFMVLVALVGMGLGMY) threads the bilayer. Over 100–278 (QLFHLQKELA…SKTFFGLYKL (179 aa)) the chain is Extracellular. N-linked (GlcNAc...) asparagine glycosylation occurs at Asn-116. The span at 125–135 (EKQIANPSTPS) shows a compositional bias: polar residues. The disordered stretch occupies residues 125 to 147 (EKQIANPSTPSETKKPRSVAHLT). A THD domain is found at 142-278 (SVAHLTGNPR…SKTFFGLYKL (137 aa)). A disulfide bridge connects residues Cys-199 and Cys-230. 2 N-linked (GlcNAc...) asparagine glycosylation sites follow: Asn-247 and Asn-257.

The protein belongs to the tumor necrosis factor family. In terms of assembly, homotrimer. Interacts with ARHGAP9, BAIAP2L1, BTK, CACNB3, CACNB4, CRK, DLG2, DNMBP, DOCK4, EPS8L3, FGR, FYB1, FYN, HCK, ITK, ITSN2, KALRN, LYN, MACC1, MIA, MPP4, MYO15A, NCF1, NCK1, NCK2, NCKIPSD, OSTF1, PIK3R1, PSTPIP1, RIMBP3C, SAMSN1, SH3GL3, SH3PXD2B, SH3PXD2A, SH3RF2, SKAP2, SNX33, SNX9, SORBS3, SPTA1, SRC, SRGAP1, SRGAP2, SRGAP3, TEC, TJP3 and YES1. Post-translationally, the soluble form derives from the membrane form by proteolytic processing. The membrane-bound form undergoes two successive intramembrane proteolytic cleavages. The first one is processed by ADAM10 producing an N-terminal fragment, which lacks the receptor-binding extracellular domain. This ADAM10-processed FasL (FasL APL) remnant form is still membrane anchored and further processed by SPPL2A that liberates the FasL intracellular domain (FasL ICD). FasL shedding by ADAM10 is a prerequisite for subsequent intramembrane cleavage by SPPL2A in T-cells. Phosphorylated by FGR on tyrosine residues; this is required for ubiquitination and subsequent internalization. In terms of processing, N-glycosylated. Post-translationally, monoubiquitinated. In terms of tissue distribution, expressed in activated splenocytes and thymocytes. Moderate or weak expression found in small intestines, kidney and lung.

The protein localises to the cell membrane. It localises to the cytoplasmic vesicle lumen. The protein resides in the lysosome lumen. It is found in the secreted. Its subcellular location is the nucleus. In terms of biological role, cytokine that binds to TNFRSF6/FAS, a receptor that transduces the apoptotic signal into cells. Involved in cytotoxic T-cell-mediated apoptosis, natural killer cell-mediated apoptosis and in T-cell development. Initiates fratricidal/suicidal activation-induced cell death (AICD) in antigen-activated T-cells contributing to the termination of immune responses. TNFRSF6/FAS-mediated apoptosis also has a role in the induction of peripheral tolerance. Binds to TNFRSF6B/DcR3, a decoy receptor that blocks apoptosis. Induces FAS-mediated activation of NF-kappa-B, initiating non-apoptotic signaling pathways. Can induce apoptosis but does not appear to be essential for this process. Functionally, cytoplasmic form induces gene transcription inhibition. The sequence is that of Tumor necrosis factor ligand superfamily member 6 (Faslg) from Rattus norvegicus (Rat).